The following is a 177-amino-acid chain: Putative acetyltransferase FG08082 (177 aa).

The N-acetyltransferase domain maps to 81–174 (EEWEQVGLVR…VSIAMVEGPG (94 aa)).

The protein belongs to the acetyltransferase family.

Its pathway is mycotoxin biosynthesis. Putative acetyltransferase; part of the gene cluster that mediates the biosynthesis of butenolide, a mycotoxin that shows antibiotic activity but does not seem to play a major role in the spread of head blight in wheat. Butenolide is derived from glutamic acid via a 4-acetamido-2-butenoic acid intermediate. The predicted function of the NADH:flavin oxidoreductase FG08077, the cytochrome P450 monooxygenase FG08079, the decarboxylase FG08083, and the putative acetyltransferase FG08082 are consistent with this pathway, however, the respective activities of the butelonide biosynthesis cluster enzymes have still to be experimentally determined. The protein is Putative acetyltransferase FG08082 of Gibberella zeae (strain ATCC MYA-4620 / CBS 123657 / FGSC 9075 / NRRL 31084 / PH-1) (Wheat head blight fungus).